Reading from the N-terminus, the 151-residue chain is Small ribosomal subunit protein uS15 (151 aa).

The protein belongs to the universal ribosomal protein uS15 family. In terms of assembly, component of the small ribosomal subunit. Part of the small subunit (SSU) processome, composed of more than 70 proteins and the RNA chaperone small nucleolar RNA (snoRNA) U3.

Its subcellular location is the cytoplasm. It is found in the nucleus. The protein localises to the nucleolus. Component of the small ribosomal subunit. The ribosome is a large ribonucleoprotein complex responsible for the synthesis of proteins in the cell. Part of the small subunit (SSU) processome, first precursor of the small eukaryotic ribosomal subunit. During the assembly of the SSU processome in the nucleolus, many ribosome biogenesis factors, an RNA chaperone and ribosomal proteins associate with the nascent pre-rRNA and work in concert to generate RNA folding, modifications, rearrangements and cleavage as well as targeted degradation of pre-ribosomal RNA by the RNA exosome. The sequence is that of Small ribosomal subunit protein uS15 (rps-13) from Caenorhabditis elegans.